The following is a 156-amino-acid chain: Small ribosomal subunit protein uS7 (156 aa).

This sequence belongs to the universal ribosomal protein uS7 family. As to quaternary structure, part of the 30S ribosomal subunit. Contacts proteins S9 and S11.

In terms of biological role, one of the primary rRNA binding proteins, it binds directly to 16S rRNA where it nucleates assembly of the head domain of the 30S subunit. Is located at the subunit interface close to the decoding center, probably blocks exit of the E-site tRNA. The polypeptide is Small ribosomal subunit protein uS7 (Hyphomonas neptunium (strain ATCC 15444)).